We begin with the raw amino-acid sequence, 1117 residues long: Leucine-rich repeats and immunoglobulin-like domains protein 3 (1117 aa).

A signal peptide spans Met1–Ala24. An LRRNT domain is found at Leu38–Ala74. LRR repeat units lie at residues Trp75–Gln98, Ser99–Ser120, Asn122–Ala143, Ser146–Gln168, Leu169–Asn189, Thr193–Leu214, Gln216–Gly237, Ala240–Gly261, Asn264–Gly285, Met288–Phe309, Lys312–Gly333, Leu336–Gly357, Ser360–Phe382, Arg387–Gly408, and Thr411–Gln432. An N-linked (GlcNAc...) asparagine glycan is attached at Asn156. An N-linked (GlcNAc...) asparagine glycan is attached at Asn274. N-linked (GlcNAc...) asparagine glycosylation is found at Asn442 and Asn469. The LRRCT domain maps to Ser444–Asp495. Ig-like C2-type domains follow at residues Pro499 to Thr598, Pro603 to Thr692, and Pro697 to Ser783. Cystine bridges form between Cys520–Cys581 and Cys624–Cys676. Residues Asn688 and Asn729 are each glycosylated (N-linked (GlcNAc...) asparagine). Residues Cys718 and Cys767 are joined by a disulfide bond. The chain crosses the membrane as a helical span at residues Val810–Ile830. Asn1014 carries N-linked (GlcNAc...) asparagine glycosylation. Residues Asp1019–Asn1093 are disordered. The span at Asp1083–Asn1093 shows a compositional bias: basic and acidic residues.

Interacts with EGFR, ERBB2 and ERBB4 (in vitro). Widely expressed.

It is found in the cell membrane. The protein localises to the cytoplasmic vesicle membrane. Plays a role in craniofacial and inner ear morphogenesis during embryonic development. Acts within the otic vesicle epithelium to control formation of the lateral semicircular canal in the inner ear, possibly by restricting the expression of NTN1. This is Leucine-rich repeats and immunoglobulin-like domains protein 3 (Lrig3) from Mus musculus (Mouse).